The sequence spans 282 residues: Heat stress transcription factor A-7b (282 aa).

Low complexity-rich tracts occupy residues 1-11 and 120-134; these read MDPSSSSRARS and SSSS…QSQP. 2 disordered regions span residues 1-24 and 117-139; these read MDPS…LQEA and RRTS…AHDP. Residues 26 to 120 mediate DNA binding; it reads PSPFLTKTFE…LLKSIKRRTS (95 aa). The interval 137-196 is hydrophobic repeat HR-A/B; the sequence is HDPGVELPQLREERHVLMMEISTLRQEEQRARGYVQAMEQRINGAEKKQRHMMSFLRRAV. Positions 208–212 match the Nuclear localization signal motif; the sequence is QKRDR. The Nuclear export signal motif lies at 232 to 240; sequence LSELEALAL. The AHA signature appears at 259 to 268; that stretch reads DGFWEELLMN.

The protein belongs to the HSF family. Class A subfamily. As to quaternary structure, homotrimer. Exhibits temperature-dependent phosphorylation.

Its subcellular location is the cytoplasm. The protein resides in the nucleus. Functionally, transcriptional activator that specifically binds DNA sequence 5'-AGAAnnTTCT-3' known as heat shock promoter elements (HSE). This chain is Heat stress transcription factor A-7b (HSFA7B), found in Arabidopsis thaliana (Mouse-ear cress).